The sequence spans 639 residues: Mediator of RNA polymerase II transcription subunit 17 (639 aa).

Positions 32–43 are enriched in polar residues; sequence ASATVTTNGTTA. Disordered regions lie at residues 32 to 68 and 130 to 159; these read ASATVTTNGTTADSSEDSGSQQSVSSAPIQQNSEEHS and MGDADEESDLKPQEITDDDSNARLKPNNDS. The span at 48–57 shows a compositional bias: low complexity; it reads DSGSQQSVSS. Positions 58–68 are enriched in polar residues; the sequence is APIQQNSEEHS. Residues 245–271 are a coiled coil; sequence WKLRSLEDSKALLKENYAKLQKSLEVE.

It belongs to the Mediator complex subunit 17 family. As to quaternary structure, component of the Mediator complex.

The protein localises to the nucleus. Functionally, component of the Mediator complex, a coactivator involved in the regulated transcription of nearly all RNA polymerase II-dependent genes. Mediator functions as a bridge to convey information from gene-specific regulatory proteins to the basal RNA polymerase II transcription machinery. Mediator is recruited to promoters by direct interactions with regulatory proteins and serves as a scaffold for the assembly of a functional preinitiation complex with RNA polymerase II and the general transcription factors. This is Mediator of RNA polymerase II transcription subunit 17 (SRB4) from Eremothecium gossypii (strain ATCC 10895 / CBS 109.51 / FGSC 9923 / NRRL Y-1056) (Yeast).